Consider the following 597-residue polypeptide: MAGTVRTACLLVAMLLGLGCLGQAQPPPPPDATCHQVRSFFQRLQPGLKWVPETPVPGSDLQVCLPKGPTCCSRKMEEKYQLTARLNMEQLLQSASMELKFLIIQNAAVFQEAFEIVVRHAKNYTNAMFKNNYPSLTPQAFEFVGEFFTDVSLYILGSDINVDDMVNELFDSLFPVIYTQMMNPGLPESVLDINECLRGARRDLKVFGSFPKLIMTQVSKSLQVTRIFLQALNLGIEVINTTDHLKFSKDCGRMLTRMWYCSYCQGLMMVKPCGGYCNVVMQGCMAGVVEIDKYWREYILSLEELVNGMYRIYDMENVLLGLFSTIHDSIQYVQKNGGKLTTTIGKLCAHSQQRQYRSAYYPEDLFIDKKVLKVARVEHEETLSSRRRELIQKLKSFISFYSALPGYICSHSPVAENDTLCWNGQELVERYSQKAARNGMKNQFNLHELKMKGPEPVVSQIIDKLKHINQLLRTMSVPKGKVVDKSLDEEGLESGDCGDDEDECIGSSGDGMMKVKNQLRFLAELAYDLDVDDAPGNKQHGNQKDNEITTSHSVGNMPSPLKILISVAIYVACFFSWCTDLPCPCLCCPAAPCGPPT.

A signal peptide spans 1–24 (MAGTVRTACLLVAMLLGLGCLGQA). Pyrrolidone carboxylic acid is present on Q25. Disulfide bonds link C34–C71, C64–C261, C72–C264, C196–C348, C251–C284, C273–C421, and C277–C409. Residues N123 and N240 are each glycosylated (N-linked (GlcNAc...) asparagine). Residue S351 is modified to Phosphoserine. N417 carries an N-linked (GlcNAc...) asparagine glycan. S494 and S508 each carry an O-linked (Xyl...) (glycosaminoglycan) serine glycan. The interval 533 to 553 (DAPGNKQHGNQKDNEITTSHS) is disordered.

Belongs to the glypican family. As to quaternary structure, heterodimer; disulfide-linked. Cleavage by a furin-like convertase results in production of alpha and beta chains which form a disulfide-linked heterodimer. Interacts with DPP4. Interacts with FGF2. Interacts with WNT5A. Also interacts with WNT3A and WNT7B. Interacts with hedgehog protein SHH; the heparan sulfate chains are not required for the interaction. Also interacts with hedgehog protein IHH. Interacts with CD81. Interacts with Wnt receptors FZD4, FZD7 and FZD8; the heparan sulfate chains are required for the interaction. In terms of processing, O-glycosylated; contains heparan sulfate and/or chondroitin sulfate. Post-translationally, cleaved intracellularly by a furin-like convertase to generate 2 subunits, alpha and beta, which remain associated through disulfide bonds and are associated with the cell surface via the GPI-anchor. This processing is essential for its role in inhibition of hedgehog signaling. A second proteolytic event may result in cleavage of the protein on the cell surface, separating it from the GPI-anchor and leading to its shedding from the cell surface.

It localises to the cell membrane. Functionally, cell surface proteoglycan. Negatively regulates the hedgehog signaling pathway when attached via the GPI-anchor to the cell surface by competing with the hedgehog receptor PTC1 for binding to hedgehog proteins. Binding to the hedgehog protein SHH triggers internalization of the complex by endocytosis and its subsequent lysosomal degradation. Positively regulates the canonical Wnt signaling pathway by binding to the Wnt receptor Frizzled and stimulating the binding of the Frizzled receptor to Wnt ligands. Positively regulates the non-canonical Wnt signaling pathway. Binds to CD81 which decreases the availability of free CD81 for binding to the transcriptional repressor HHEX, resulting in nuclear translocation of HHEX and transcriptional repression. Inhibits the dipeptidyl peptidase activity of DPP4. Plays a role in limb patterning and skeletal development by controlling the cellular response to BMP4. Modulates the effects of growth factors BMP2, BMP7 and FGF7 on renal branching morphogenesis. Required for coronary vascular development. Plays a role in regulating cell movements during gastrulation. The polypeptide is Glypican-3 (Gpc3) (Rattus norvegicus (Rat)).